We begin with the raw amino-acid sequence, 285 residues long: MANDKLESLIEAAFEDRAQINASTQGDVRDGVERALLELDSGKLRVAEKQAGATGPDAWKVNQWLKKAVLLSFRLNDMSTIEGGPGGSSWWDKVPSKFAGWTAAEHAAAGFRSVPNCVVRRSAYIAPGVVLMPSFVNLGAYVDTGSMVDTWATVGSCAQIGKNVHLSGGVGIGGVLEPLQANPTIIEDDCFIGARSEIVEGVIIGQGSVVSMGVFISSSTKIIDRATGKIHIGYVPPYSVVVSGNLPGKNLPDGTPGPSLYCAVIVKTVDAQTRSKTGINELLRD.

Belongs to the transferase hexapeptide repeat family.

Its subcellular location is the cytoplasm. It catalyses the reaction (S)-2,3,4,5-tetrahydrodipicolinate + succinyl-CoA + H2O = (S)-2-succinylamino-6-oxoheptanedioate + CoA. Its pathway is amino-acid biosynthesis; L-lysine biosynthesis via DAP pathway; LL-2,6-diaminopimelate from (S)-tetrahydrodipicolinate (succinylase route): step 1/3. This chain is 2,3,4,5-tetrahydropyridine-2,6-dicarboxylate N-succinyltransferase, found in Beijerinckia indica subsp. indica (strain ATCC 9039 / DSM 1715 / NCIMB 8712).